A 273-amino-acid polypeptide reads, in one-letter code: Methylthioribulose-1-phosphate dehydratase (273 aa).

The interval 1–27 (MCPTCPPSAASASSENNNTDNNDHLVL) is disordered. C114 is a substrate binding site. Zn(2+) contacts are provided by H132 and H134. Residue E168 is the Proton donor/acceptor of the active site. H225 contacts Zn(2+).

Belongs to the aldolase class II family. MtnB subfamily. Requires Zn(2+) as cofactor.

The protein resides in the cytoplasm. The enzyme catalyses 5-(methylsulfanyl)-D-ribulose 1-phosphate = 5-methylsulfanyl-2,3-dioxopentyl phosphate + H2O. It functions in the pathway amino-acid biosynthesis; L-methionine biosynthesis via salvage pathway; L-methionine from S-methyl-5-thio-alpha-D-ribose 1-phosphate: step 2/6. Its function is as follows. Catalyzes the dehydration of methylthioribulose-1-phosphate (MTRu-1-P) into 2,3-diketo-5-methylthiopentyl-1-phosphate (DK-MTP-1-P). The polypeptide is Methylthioribulose-1-phosphate dehydratase (Sordaria macrospora (strain ATCC MYA-333 / DSM 997 / K(L3346) / K-hell)).